Consider the following 279-residue polypeptide: Proteasome subunit beta (279 aa).

Positions 1–53 are cleaved as a propeptide — removed in mature form; by autocatalysis; it reads MSGTAEFPGRIPAPYLEVGSSSFVELLGSVAPELLPGRRPLPPGDMGDAAPHG. The active-site Nucleophile is the Thr-54.

This sequence belongs to the peptidase T1B family. In terms of assembly, the 20S proteasome core is composed of 14 alpha and 14 beta subunits that assemble into four stacked heptameric rings, resulting in a barrel-shaped structure. The two inner rings, each composed of seven catalytic beta subunits, are sandwiched by two outer rings, each composed of seven alpha subunits. The catalytic chamber with the active sites is on the inside of the barrel. Has a gated structure, the ends of the cylinder being occluded by the N-termini of the alpha-subunits. Is capped by the proteasome-associated ATPase, ARC.

The protein localises to the cytoplasm. It carries out the reaction Cleavage of peptide bonds with very broad specificity.. It participates in protein degradation; proteasomal Pup-dependent pathway. The formation of the proteasomal ATPase ARC-20S proteasome complex, likely via the docking of the C-termini of ARC into the intersubunit pockets in the alpha-rings, may trigger opening of the gate for substrate entry. Interconversion between the open-gate and close-gate conformations leads to a dynamic regulation of the 20S proteasome proteolysis activity. Functionally, component of the proteasome core, a large protease complex with broad specificity involved in protein degradation. The sequence is that of Proteasome subunit beta from Stackebrandtia nassauensis (strain DSM 44728 / CIP 108903 / NRRL B-16338 / NBRC 102104 / LLR-40K-21).